The following is a 418-amino-acid chain: Glutamyl-tRNA reductase (418 aa).

Residues 49 to 52 (TCNR), Ser109, 114 to 116 (EPQ), and Gln120 contribute to the substrate site. Cys50 serves as the catalytic Nucleophile. 189 to 194 (GAGETI) provides a ligand contact to NADP(+).

It belongs to the glutamyl-tRNA reductase family. In terms of assembly, homodimer.

The enzyme catalyses (S)-4-amino-5-oxopentanoate + tRNA(Glu) + NADP(+) = L-glutamyl-tRNA(Glu) + NADPH + H(+). It functions in the pathway porphyrin-containing compound metabolism; protoporphyrin-IX biosynthesis; 5-aminolevulinate from L-glutamyl-tRNA(Glu): step 1/2. Catalyzes the NADPH-dependent reduction of glutamyl-tRNA(Glu) to glutamate 1-semialdehyde (GSA). The polypeptide is Glutamyl-tRNA reductase (Escherichia coli O127:H6 (strain E2348/69 / EPEC)).